The chain runs to 235 residues: Auracyanin-B (235 aa).

A compositionally biased stretch (low complexity) spans 1–21 (MSWRGSGRSNFRSRSSSNGGS). Disordered stretches follow at residues 1 to 27 (MSWRGSGRSNFRSRSSSNGGSTFSGGS) and 64 to 107 (ATPR…NVVN). The N-terminal stretch at 1 to 56 (MSWRGSGRSNFRSRSSSNGGSTFSGGSAGGPPLIVMMGLAFGAGLIMLIVMIASNA) is a signal peptide. The propeptide occupies 57 to 80 (TAGGFVAATPRPTATPRPTAAPAP). Residues 69-86 (TATPRPTAAPAPTQPPAA) are compositionally biased toward pro residues. A compositionally biased stretch (low complexity) spans 87-100 (QPTTAPATQAANAP). In terms of domain architecture, Plastocyanin-like spans 111–235 (AQTVEVRAAP…GMKGTLTVTP (125 aa)). Cu cation-binding residues include H152, C217, H222, and M227.

Belongs to the multicopper oxidase family. Requires Cu cation as cofactor. Glycosylated.

The protein resides in the cell membrane. Its function is as follows. Probably a soluble electron acceptor for the integral membrane protein electron transfer alternative complex III (ACIII). The polypeptide is Auracyanin-B (Chloroflexus aurantiacus (strain ATCC 29366 / DSM 635 / J-10-fl)).